Here is a 426-residue protein sequence, read N- to C-terminus: MDKRISPAAAITGAITLPGDKSISHRYAMISSIAEGDSRILNYSTGADCHSTLGCMRALGIEITGEGTEFVVHGKGLDGLRAPAGDLDAGNSGSTIRMLSGILAAQPFTTRIFGDESLSRRPMQRIMKPLAQMGAEIRAREEKFPPLEIHGGKLRAIDYTLPVPSAQVKTCVLFAGLFAEGETTVTEPVRSRDHTEIALREFGAELTAAKGKITLTGRPRLTGRDLIVPSDISSAAFFIVAALLVRGSSLVIRGVGLNPSRSALLDLLIGMGAKIRIPQLESQNGELIGEIQVEHSALQGGVIEGGLTAAVIDEIPVLAVLGAATEEGLTIKDAGELRVKETDRIATVVENLRRLGVTAEETPDGLVIPGRQKFRAAEFDSFGDHRIAMAFAVAALRGDGESVIQNADAASVSFPEFWSTLERIAE.

Lysine 21, serine 22, and arginine 26 together coordinate 3-phosphoshikimate. Residue lysine 21 participates in phosphoenolpyruvate binding. Residues glycine 93 and arginine 121 each contribute to the phosphoenolpyruvate site. Serine 165, glutamine 167, aspartate 313, and lysine 340 together coordinate 3-phosphoshikimate. Glutamine 167 lines the phosphoenolpyruvate pocket. Aspartate 313 acts as the Proton acceptor in catalysis. Positions 344 and 386 each coordinate phosphoenolpyruvate.

Belongs to the EPSP synthase family. As to quaternary structure, monomer.

It localises to the cytoplasm. The enzyme catalyses 3-phosphoshikimate + phosphoenolpyruvate = 5-O-(1-carboxyvinyl)-3-phosphoshikimate + phosphate. The protein operates within metabolic intermediate biosynthesis; chorismate biosynthesis; chorismate from D-erythrose 4-phosphate and phosphoenolpyruvate: step 6/7. Functionally, catalyzes the transfer of the enolpyruvyl moiety of phosphoenolpyruvate (PEP) to the 5-hydroxyl of shikimate-3-phosphate (S3P) to produce enolpyruvyl shikimate-3-phosphate and inorganic phosphate. This chain is 3-phosphoshikimate 1-carboxyvinyltransferase, found in Solibacter usitatus (strain Ellin6076).